The primary structure comprises 391 residues: Putative ABC transporter glucose-binding protein TsgA13 (391 aa).

A signal peptide spans 1–28; it reads MLDEESSIQRRDVLSALGAAGVTTLAGC. A disordered region spans residues 24-71; that stretch reads TLAGCTGGDTGDTDDTEASETTASEGTTSGTTTGDVETTDGGGPSEGE. Positions 42–59 are enriched in low complexity; sequence SETTASEGTTSGTTTGDV.

This sequence belongs to the BMP lipoprotein family. In terms of assembly, the complex is composed of two ATP-binding proteins (TsgD13), two transmembrane proteins (TsgB13 and TsgC13) and a solute-binding protein (TsgA13).

Its function is as follows. Part of an ABC transporter complex involved in glucose import. This Haloferax volcanii (strain ATCC 29605 / DSM 3757 / JCM 8879 / NBRC 14742 / NCIMB 2012 / VKM B-1768 / DS2) (Halobacterium volcanii) protein is Putative ABC transporter glucose-binding protein TsgA13 (tsgA13).